Consider the following 495-residue polypeptide: Cobyric acid synthase (495 aa).

The GATase cobBQ-type domain occupies 250–444 (SLKISILRLP…LHGLFDNGAW (195 aa)). The Nucleophile role is filled by C331. Residue H436 is part of the active site.

The protein belongs to the CobB/CobQ family. CobQ subfamily.

It functions in the pathway cofactor biosynthesis; adenosylcobalamin biosynthesis. Its function is as follows. Catalyzes amidations at positions B, D, E, and G on adenosylcobyrinic A,C-diamide. NH(2) groups are provided by glutamine, and one molecule of ATP is hydrogenolyzed for each amidation. The chain is Cobyric acid synthase from Rippkaea orientalis (strain PCC 8801 / RF-1) (Cyanothece sp. (strain PCC 8801)).